The chain runs to 427 residues: Adenylosuccinate synthetase (427 aa).

Residues 12–18 and 40–42 each bind GTP; these read GDEGKGK and GHT. Catalysis depends on Asp-13, which acts as the Proton acceptor. Residues Asp-13 and Gly-40 each contribute to the Mg(2+) site. Residues 13-16, 38-41, Thr-130, Arg-144, Gln-224, Thr-239, and Arg-303 each bind IMP; these read DEGK and NAGH. His-41 (proton donor) is an active-site residue. 299-305 serves as a coordination point for substrate; it reads VTTGRAR. GTP is bound by residues Arg-305, 331–333, and 413–415; these read KID and SVG.

Belongs to the adenylosuccinate synthetase family. Homodimer. Requires Mg(2+) as cofactor.

Its subcellular location is the cytoplasm. It catalyses the reaction IMP + L-aspartate + GTP = N(6)-(1,2-dicarboxyethyl)-AMP + GDP + phosphate + 2 H(+). The protein operates within purine metabolism; AMP biosynthesis via de novo pathway; AMP from IMP: step 1/2. In terms of biological role, plays an important role in the de novo pathway of purine nucleotide biosynthesis. Catalyzes the first committed step in the biosynthesis of AMP from IMP. The polypeptide is Adenylosuccinate synthetase (Clostridium novyi (strain NT)).